The sequence spans 474 residues: tRNA-2-methylthio-N(6)-dimethylallyladenosine synthase (474 aa).

The region spanning 3-120 (KKLHIKTWGC…LPEMIEQVRR (118 aa)) is the MTTase N-terminal domain. Residues Cys-12, Cys-49, Cys-83, Cys-157, Cys-161, and Cys-164 each contribute to the [4Fe-4S] cluster site. One can recognise a Radical SAM core domain in the interval 143–375 (RAEGPTAFVS…QDRITQQAMR (233 aa)). The TRAM domain maps to 378–441 (RHMMGTVQRI…TNSLRGVFIR (64 aa)).

The protein belongs to the methylthiotransferase family. MiaB subfamily. Monomer. Requires [4Fe-4S] cluster as cofactor.

Its subcellular location is the cytoplasm. The enzyme catalyses N(6)-dimethylallyladenosine(37) in tRNA + (sulfur carrier)-SH + AH2 + 2 S-adenosyl-L-methionine = 2-methylsulfanyl-N(6)-dimethylallyladenosine(37) in tRNA + (sulfur carrier)-H + 5'-deoxyadenosine + L-methionine + A + S-adenosyl-L-homocysteine + 2 H(+). In terms of biological role, catalyzes the methylthiolation of N6-(dimethylallyl)adenosine (i(6)A), leading to the formation of 2-methylthio-N6-(dimethylallyl)adenosine (ms(2)i(6)A) at position 37 in tRNAs that read codons beginning with uridine. The polypeptide is tRNA-2-methylthio-N(6)-dimethylallyladenosine synthase (Shewanella baltica (strain OS185)).